A 263-amino-acid polypeptide reads, in one-letter code: Protein maestro (263 aa).

The interval 1 to 21 (MDQTPRRMLGQPLSSPATQPK) is disordered. The HEAT repeat unit spans residues 128-163 (SFFIDITLQTRTLLDDENDSLRYSAFVLFGQLADLA).

The protein resides in the nucleus. It localises to the nucleolus. The chain is Protein maestro (MRO) from Bos taurus (Bovine).